Here is a 444-residue protein sequence, read N- to C-terminus: GTPase Der (444 aa).

EngA-type G domains follow at residues 3 to 167 (PIVA…PEAE) and 180 to 353 (LRLA…AECQ). Residues 9–16 (GRPNVGKS), 56–60 (DTGGM), 119–122 (NKVD), 186–193 (GRPNAGKS), 233–237 (DTAGV), and 298–301 (NKTD) each bind GTP. In terms of domain architecture, KH-like spans 354–438 (IRIGTGELNR…PVKVVCRASH (85 aa)).

The protein belongs to the TRAFAC class TrmE-Era-EngA-EngB-Septin-like GTPase superfamily. EngA (Der) GTPase family. As to quaternary structure, associates with the 50S ribosomal subunit.

Its function is as follows. GTPase that plays an essential role in the late steps of ribosome biogenesis. This chain is GTPase Der, found in Solidesulfovibrio magneticus (strain ATCC 700980 / DSM 13731 / RS-1) (Desulfovibrio magneticus).